A 42-amino-acid polypeptide reads, in one-letter code: Potassium channel toxin gamma-KTx 3.4 (42 aa).

4 disulfide bridges follow: cysteine 5/cysteine 23, cysteine 11/cysteine 34, cysteine 20/cysteine 39, and cysteine 24/cysteine 41.

The protein belongs to the ergtoxin family. Gamma-KTx 3 subfamily. In terms of tissue distribution, expressed by the venom gland.

The protein localises to the secreted. Blocks Kv11/ERG potassium channels. This chain is Potassium channel toxin gamma-KTx 3.4, found in Centruroides gracilis (Slenderbrown scorpion).